We begin with the raw amino-acid sequence, 838 residues long: Probable glucan 1,3-beta-glucosidase D (838 aa).

Residues 1 to 23 (MPSHSRSRDRYRGRDESEPERDR) show a composition bias toward basic and acidic residues. A disordered region spans residues 1–298 (MPSHSRSRDR…GASDSDMDGA (298 aa)). Over 1-310 (MPSHSRSRDR…GTPFWKKKKT (310 aa)) the chain is Cytoplasmic. The segment covering 35 to 45 (DYEDDELDDDD) has biased composition (acidic residues). 4 stretches are compositionally biased toward basic and acidic residues: residues 111-124 (DSPR…DGDR), 149-164 (SRDD…EREA), 200-221 (AKLR…AKAE), and 234-246 (QPRR…EETP). A helical; Signal-anchor for type II membrane protein transmembrane segment spans residues 311–331 (WIAVGVVVVLLAIIIPVAVVV). At 332–838 (SKKNNEKKSD…PDFGDLPENY (507 aa)) the chain is on the extracellular side. The disordered stretch occupies residues 335–359 (NNEKKSDSTTDDTTPRNSNLDGISR). N-linked (GlcNAc...) asparagine glycosylation is found at asparagine 383, asparagine 388, asparagine 400, asparagine 553, and asparagine 565. The Proton donor role is filled by glutamate 604. 2 N-linked (GlcNAc...) asparagine glycosylation sites follow: asparagine 643 and asparagine 696. Catalysis depends on glutamate 709, which acts as the Nucleophile.

The protein belongs to the glycosyl hydrolase 5 (cellulase A) family.

It is found in the cell membrane. The catalysed reaction is Successive hydrolysis of beta-D-glucose units from the non-reducing ends of (1-&gt;3)-beta-D-glucans, releasing alpha-glucose.. In terms of biological role, glucosidase involved in the degradation of cellulosic biomass. Active on lichenan. The polypeptide is Probable glucan 1,3-beta-glucosidase D (exgD) (Aspergillus terreus (strain NIH 2624 / FGSC A1156)).